A 484-amino-acid polypeptide reads, in one-letter code: Glutamyl-tRNA(Gln) amidotransferase subunit A (484 aa).

Active-site charge relay system residues include Lys76 and Ser151. The active-site Acyl-ester intermediate is Ser175.

This sequence belongs to the amidase family. GatA subfamily. Heterotrimer of A, B and C subunits.

It catalyses the reaction L-glutamyl-tRNA(Gln) + L-glutamine + ATP + H2O = L-glutaminyl-tRNA(Gln) + L-glutamate + ADP + phosphate + H(+). Allows the formation of correctly charged Gln-tRNA(Gln) through the transamidation of misacylated Glu-tRNA(Gln) in organisms which lack glutaminyl-tRNA synthetase. The reaction takes place in the presence of glutamine and ATP through an activated gamma-phospho-Glu-tRNA(Gln). The chain is Glutamyl-tRNA(Gln) amidotransferase subunit A from Cellvibrio japonicus (strain Ueda107) (Pseudomonas fluorescens subsp. cellulosa).